A 92-amino-acid polypeptide reads, in one-letter code: Small ribosomal subunit protein uS19 (92 aa).

The protein belongs to the universal ribosomal protein uS19 family.

Protein S19 forms a complex with S13 that binds strongly to the 16S ribosomal RNA. The chain is Small ribosomal subunit protein uS19 from Thermosynechococcus vestitus (strain NIES-2133 / IAM M-273 / BP-1).